Here is a 147-residue protein sequence, read N- to C-terminus: Large ribosomal subunit protein uL15 (147 aa).

The tract at residues 20–54 (GRGIGSGKGKTSGKGHKGQKARGTGKVHPWFEGGQ) is disordered. The segment covering 30 to 44 (TSGKGHKGQKARGTG) has biased composition (basic residues).

It belongs to the universal ribosomal protein uL15 family. Part of the 50S ribosomal subunit.

In terms of biological role, binds to the 23S rRNA. The polypeptide is Large ribosomal subunit protein uL15 (Thermosipho africanus (strain TCF52B)).